We begin with the raw amino-acid sequence, 155 residues long: Ribosomal RNA large subunit methyltransferase H (155 aa).

S-adenosyl-L-methionine is bound by residues G104 and L123–F128.

Belongs to the RNA methyltransferase RlmH family. As to quaternary structure, homodimer.

It localises to the cytoplasm. It carries out the reaction pseudouridine(1915) in 23S rRNA + S-adenosyl-L-methionine = N(3)-methylpseudouridine(1915) in 23S rRNA + S-adenosyl-L-homocysteine + H(+). Specifically methylates the pseudouridine at position 1915 (m3Psi1915) in 23S rRNA. This Nitratidesulfovibrio vulgaris (strain DSM 19637 / Miyazaki F) (Desulfovibrio vulgaris) protein is Ribosomal RNA large subunit methyltransferase H.